A 137-amino-acid polypeptide reads, in one-letter code: Small ribosomal subunit protein uS11 (137 aa).

A disordered region spans residues 1 to 30 (MAQAKKGGAPKKGQKTRRREKKNVPHGAAH). The segment covering 8 to 21 (GAPKKGQKTRRREK) has biased composition (basic residues).

The protein belongs to the universal ribosomal protein uS11 family. Part of the 30S ribosomal subunit. Interacts with proteins S7 and S18. Binds to IF-3.

In terms of biological role, located on the platform of the 30S subunit, it bridges several disparate RNA helices of the 16S rRNA. Forms part of the Shine-Dalgarno cleft in the 70S ribosome. This Mycolicibacterium vanbaalenii (strain DSM 7251 / JCM 13017 / BCRC 16820 / KCTC 9966 / NRRL B-24157 / PYR-1) (Mycobacterium vanbaalenii) protein is Small ribosomal subunit protein uS11.